Here is a 577-residue protein sequence, read N- to C-terminus: Zinc finger protein 384 (577 aa).

The disordered stretch occupies residues 171–225 (TLTEEGGGGGGGGGSVAPKPPRGRKKKRMLESGLPEMNDPYVLSPEDDDDHQKDG). The segment covering 175-185 (EGGGGGGGGGS) has biased composition (gly residues). At S214 the chain carries Phosphoserine. 8 consecutive C2H2-type zinc fingers follow at residues 228-250 (YRCR…SKSH), 256-278 (HKCP…IRIH), 284-306 (YSCN…TRIH), 317-339 (HKCP…LRIH), 345-367 (YNCS…TRIH), 373-397 (YKCA…RRQH), 403-425 (FKCH…LSTH), and 433-455 (YTCT…MRKH). Low complexity predominate over residues 501 to 515 (QQQQQQQQQQQQQQQ). A disordered region spans residues 501-550 (QQQQQQQQQQQQQQQQPPPHFQSPGAAPQGGGGGDSNPNPPPQCSFDLTP).

The protein belongs to the krueppel C2H2-type zinc-finger protein family. Interacts with BCAR1.

The protein resides in the nucleus. Its function is as follows. Transcription factor that binds the consensus DNA sequence [GC]AAAAA. Seems to bind and regulate the promoters of MMP1, MMP3, MMP7 and COL1A1. The sequence is that of Zinc finger protein 384 (ZNF384) from Homo sapiens (Human).